A 418-amino-acid polypeptide reads, in one-letter code: 1-acylglycerol-3-phosphate O-acyltransferase (418 aa).

Residues 121–251 form the AB hydrolase-1 domain; it reads PTLVMVHGYG…RATWKGAVLN (131 aa). Residues 197–201 carry the GXSXG motif; sequence GHSFG. The HXXXXD motif motif lies at 379–384; sequence HFVFID.

Belongs to the peptidase S33 family. ABHD4/ABHD5 subfamily.

The protein localises to the cytoplasm. It carries out the reaction a 1-acyl-sn-glycero-3-phosphate + an acyl-CoA = a 1,2-diacyl-sn-glycero-3-phosphate + CoA. In terms of biological role, lysophosphatidic acid acyltransferase which functions in phosphatidic acid biosynthesis. Is highly specific for lysophosphatidic acid and able to use different acyl-CoA donors. May regulate neutral lipid accumulation and participate in the regulation of lipid turnover in vegetative cells. Possesses additional triacylglycerol lipase and phospholipase A2 activities in vitro. Is not active as esterase or lysophospholipase. The polypeptide is 1-acylglycerol-3-phosphate O-acyltransferase (Arabidopsis thaliana (Mouse-ear cress)).